The primary structure comprises 125 residues: Small ribosomal subunit protein uS12 (125 aa).

Asp-89 bears the 3-methylthioaspartic acid mark.

It belongs to the universal ribosomal protein uS12 family. As to quaternary structure, part of the 30S ribosomal subunit. Contacts proteins S8 and S17. May interact with IF1 in the 30S initiation complex.

Its function is as follows. With S4 and S5 plays an important role in translational accuracy. In terms of biological role, interacts with and stabilizes bases of the 16S rRNA that are involved in tRNA selection in the A site and with the mRNA backbone. Located at the interface of the 30S and 50S subunits, it traverses the body of the 30S subunit contacting proteins on the other side and probably holding the rRNA structure together. The combined cluster of proteins S8, S12 and S17 appears to hold together the shoulder and platform of the 30S subunit. The sequence is that of Small ribosomal subunit protein uS12 from Cupriavidus metallidurans (strain ATCC 43123 / DSM 2839 / NBRC 102507 / CH34) (Ralstonia metallidurans).